Reading from the N-terminus, the 560-residue chain is MSPAKDVKVYKKILEQNKDIQDLLDKIVFDAQHGQIWFDENRMLLMHTSILGFLRKDLYQMLGLERTKRFFIRCGYQAGMRDAEVTSKLRPNLNEAEAFMAGPQMHGIRGMVQVEVNELHLSHDLKQFYADFNWLNSFEAEVHLSEFGASDQPACWMLLGYACGYSSFVMGQTIIYQETHCVAQGDEHCRIIGKPLSEWENADELIRFMSPDAVSDEIIALQAELNQLKKNIYTEAESDYTMFNAVGESVAYRKVCDLLKKAAGSKVAVLLQGETGVGKEAFARGIHNGSQRQAQPFVAVNCACIPPDLIESELFGVEKGAFTGAVQSRMGKFERAHGGTIFLDEVVELSPRAQAALLRMLQEGEFERVGDSRTRQVDVRLVAATNEDLEQAVKDGKFRADLYYRLNIFPVIIPPLRERREDIPLLINHFLARFENMYNKTLKGLSDKAKNFMMKYDWPGNIRELENLLERATLLTDHQQEIKLDSLFPQHKDLEAVGETAQSLINVEDLFSENFSLDQLEQNIIRSAMDKSQQNVSEAARMLGISRATLDYRLKKITLG.

His106 and Trp134 together coordinate phenol. Cys155, Glu178, Cys181, and Cys189 together coordinate Zn(2+). The 230-residue stretch at 245–474 (AVGESVAYRK…LENLLERATL (230 aa)) folds into the Sigma-54 factor interaction domain. Residues 273-280 (GETGVGKE) and 336-345 (AHGGTIFLDE) contribute to the ATP site.

In terms of assembly, homodimer.

Its activity is regulated as follows. Activity is triggered by phenol binding. Functionally, involved in the regulation of the phenol degradation pathway. Activates phenol hydroxylase expression in the presence of phenol. This is Phenol regulator MopR from Acinetobacter guillouiae (Acinetobacter genomosp. 11).